A 149-amino-acid polypeptide reads, in one-letter code: 3-dehydroquinate dehydratase (149 aa).

Catalysis depends on tyrosine 22, which acts as the Proton acceptor. Substrate-binding residues include asparagine 73, histidine 79, and aspartate 86. Histidine 99 functions as the Proton donor in the catalytic mechanism. Residues 100-101 and arginine 110 contribute to the substrate site; that span reads LS.

This sequence belongs to the type-II 3-dehydroquinase family. As to quaternary structure, homododecamer.

It catalyses the reaction 3-dehydroquinate = 3-dehydroshikimate + H2O. It participates in metabolic intermediate biosynthesis; chorismate biosynthesis; chorismate from D-erythrose 4-phosphate and phosphoenolpyruvate: step 3/7. Its function is as follows. Catalyzes a trans-dehydration via an enolate intermediate. In Prochlorococcus marinus (strain SARG / CCMP1375 / SS120), this protein is 3-dehydroquinate dehydratase.